The primary structure comprises 239 residues: Octanoyltransferase (239 aa).

A BPL/LPL catalytic domain is found at 48–236 (DGGDELVWLV…AFEAVFGETT (189 aa)). Residues 87–94 (RGGEYTYH), 167–169 (ALG), and 180–182 (GLS) contribute to the substrate site. The Acyl-thioester intermediate role is filled by Cys-198.

The protein belongs to the LipB family.

The protein localises to the cytoplasm. It catalyses the reaction octanoyl-[ACP] + L-lysyl-[protein] = N(6)-octanoyl-L-lysyl-[protein] + holo-[ACP] + H(+). It functions in the pathway protein modification; protein lipoylation via endogenous pathway; protein N(6)-(lipoyl)lysine from octanoyl-[acyl-carrier-protein]: step 1/2. Its function is as follows. Catalyzes the transfer of endogenously produced octanoic acid from octanoyl-acyl-carrier-protein onto the lipoyl domains of lipoate-dependent enzymes. Lipoyl-ACP can also act as a substrate although octanoyl-ACP is likely to be the physiological substrate. The polypeptide is Octanoyltransferase (Rhizobium johnstonii (strain DSM 114642 / LMG 32736 / 3841) (Rhizobium leguminosarum bv. viciae)).